Reading from the N-terminus, the 652-residue chain is Acetolactate synthase 3, chloroplastic (652 aa).

Polar residues predominate over residues 1–20 (MAAATSSSPISLTAKPSSKS). Residues 1-23 (MAAATSSSPISLTAKPSSKSPLP) are disordered. The transit peptide at 1–69 (MAAATSSSPI…PEKTDKIKTF (69 aa)) directs the protein to the chloroplast. Glu-126 serves as a coordination point for thiamine diphosphate. Residues Arg-228, 334 to 355 (HGTV…FGVR), and 377 to 396 (DIDS…VCGD) contribute to the FAD site. The tract at residues 469-549 (QHQMWAAQFY…VKILLLNNQH (81 aa)) is thiamine pyrophosphate binding. The Mg(2+) site is built by Asp-520 and Asn-547.

This sequence belongs to the TPP enzyme family. Mg(2+) is required as a cofactor. It depends on thiamine diphosphate as a cofactor.

It localises to the plastid. It is found in the chloroplast. It carries out the reaction 2 pyruvate + H(+) = (2S)-2-acetolactate + CO2. It participates in amino-acid biosynthesis; L-isoleucine biosynthesis; L-isoleucine from 2-oxobutanoate: step 1/4. It functions in the pathway amino-acid biosynthesis; L-valine biosynthesis; L-valine from pyruvate: step 1/4. The polypeptide is Acetolactate synthase 3, chloroplastic (Brassica napus (Rape)).